We begin with the raw amino-acid sequence, 555 residues long: Oligo-1,6-glucosidase (555 aa).

Catalysis depends on Asp199, which acts as the Nucleophile. Residue Glu255 is the Proton donor of the active site.

Belongs to the glycosyl hydrolase 13 family.

It localises to the cytoplasm. It carries out the reaction Hydrolysis of (1-&gt;6)-alpha-D-glucosidic linkages in some oligosaccharides produced from starch and glycogen by alpha-amylase, and in isomaltose.. This is Oligo-1,6-glucosidase (malL) from Heyndrickxia coagulans (Weizmannia coagulans).